The chain runs to 195 residues: Archaetidylinositol phosphate synthase (195 aa).

Helical transmembrane passes span 27–47 and 54–74; these read IALP…AASA and LITG…DGAV. Mg(2+)-binding residues include Asp68, Asp71, Asp89, and Asp93. The Proton acceptor role is filled by Asp93. 2 helical membrane-spanning segments follow: residues 99 to 119 and 158 to 178; these read IIII…LLAL and LAGY…LAAL.

Belongs to the CDP-alcohol phosphatidyltransferase class-I family. Mn(2+) is required as a cofactor. It depends on Mg(2+) as a cofactor.

The protein resides in the cell membrane. It carries out the reaction CDP-2,3-bis-O-(phytanyl)-sn-glycerol + 1D-myo-inositol 3-phosphate = saturated 1-archaetidyl-1D-myo-inositol 3-phosphate + CMP + H(+). It participates in lipid metabolism; phospholipid metabolism. In terms of biological role, catalyzes the formation of archaetidylinositol phosphate (AIP) from CDP-archaeol (CDP-ArOH or CDP-2,3-bis-(O-phytanyl)-sn-glycerol) and 1L-myo-inositol 1-phosphate (IP or 1D-myo-inositol 3-phosphate). AIP is a precursor of archaetidyl-myo-inositol (AI), an ether-type inositol phospholipid ubiquitously distributed in archaea membranes and essential for glycolipid biosynthesis in archaea. This is Archaetidylinositol phosphate synthase from Methanothermobacter thermautotrophicus (strain ATCC 29096 / DSM 1053 / JCM 10044 / NBRC 100330 / Delta H) (Methanobacterium thermoautotrophicum).